Here is a 184-residue protein sequence, read N- to C-terminus: Cytidylate kinase (184 aa).

ATP is bound at residue 8 to 16; sequence GQPGSGKTT.

This sequence belongs to the cytidylate kinase family. Type 2 subfamily.

The protein localises to the cytoplasm. It carries out the reaction CMP + ATP = CDP + ADP. The enzyme catalyses dCMP + ATP = dCDP + ADP. This chain is Cytidylate kinase, found in Pyrobaculum aerophilum (strain ATCC 51768 / DSM 7523 / JCM 9630 / CIP 104966 / NBRC 100827 / IM2).